The following is a 901-amino-acid chain: Protein translocase subunit SecA (901 aa).

ATP-binding positions include Q87, 105–109, and D512; that span reads GEGKT. Residues C885, C887, C896, and H897 each coordinate Zn(2+).

The protein belongs to the SecA family. Monomer and homodimer. Part of the essential Sec protein translocation apparatus which comprises SecA, SecYEG and auxiliary proteins SecDF-YajC and YidC. Zn(2+) is required as a cofactor.

It localises to the cell inner membrane. The protein localises to the cytoplasm. The catalysed reaction is ATP + H2O + cellular proteinSide 1 = ADP + phosphate + cellular proteinSide 2.. In terms of biological role, part of the Sec protein translocase complex. Interacts with the SecYEG preprotein conducting channel. Has a central role in coupling the hydrolysis of ATP to the transfer of proteins into and across the cell membrane, serving both as a receptor for the preprotein-SecB complex and as an ATP-driven molecular motor driving the stepwise translocation of polypeptide chains across the membrane. The sequence is that of Protein translocase subunit SecA from Salmonella enteritidis PT4 (strain P125109).